We begin with the raw amino-acid sequence, 251 residues long: ATP synthase subunit a (251 aa).

Helical transmembrane passes span 34 to 54 (VFLT…AASS), 93 to 113 (FVGT…LVPF), 130 to 150 (INTT…AGFS), 195 to 215 (LVVG…VMAL), and 216 to 236 (GLFT…AYIG).

The protein belongs to the ATPase A chain family. As to quaternary structure, F-type ATPases have 2 components, CF(1) - the catalytic core - and CF(0) - the membrane proton channel. CF(1) has five subunits: alpha(3), beta(3), gamma(1), delta(1), epsilon(1). CF(0) has four main subunits: a, b, b' and c.

It localises to the cellular thylakoid membrane. Its function is as follows. Key component of the proton channel; it plays a direct role in the translocation of protons across the membrane. The sequence is that of ATP synthase subunit a from Nostoc sp. (strain PCC 7120 / SAG 25.82 / UTEX 2576).